Here is a 379-residue protein sequence, read N- to C-terminus: Sulfate adenylyltransferase (379 aa).

This sequence belongs to the sulfate adenylyltransferase family.

It carries out the reaction sulfate + ATP + H(+) = adenosine 5'-phosphosulfate + diphosphate. The protein operates within sulfur metabolism; hydrogen sulfide biosynthesis; sulfite from sulfate: step 1/3. The protein is Sulfate adenylyltransferase of Cenarchaeum symbiosum (strain A).